Consider the following 58-residue polypeptide: Protein SHMOOSE (58 aa).

Residues 27-58 (FGATPNKSNNHAHYYNHPNPDFPNSPHPYHPR) are disordered. A compositionally biased stretch (low complexity) spans 35–45 (NNHAHYYNHPN). Positions 46–58 (PDFPNSPHPYHPR) are enriched in pro residues.

In terms of assembly, interacts with IMMT/mitofilin. As to expression, detected in cerebrospinal fluid (at protein level).

The protein localises to the mitochondrion. The protein resides in the nucleus. Its function is as follows. Increases neural cell metabolic activity and mitochondrial oxygen consumption rate. The polypeptide is Protein SHMOOSE (Homo sapiens (Human)).